The sequence spans 807 residues: Glycerol-3-phosphate acyltransferase (807 aa).

The HXXXXD motif motif lies at 308-313 (CHRSHM).

The protein belongs to the GPAT/DAPAT family.

Its subcellular location is the cell inner membrane. It carries out the reaction sn-glycerol 3-phosphate + an acyl-CoA = a 1-acyl-sn-glycero-3-phosphate + CoA. Its pathway is phospholipid metabolism; CDP-diacylglycerol biosynthesis; CDP-diacylglycerol from sn-glycerol 3-phosphate: step 1/3. This chain is Glycerol-3-phosphate acyltransferase, found in Shewanella sp. (strain MR-4).